Here is a 788-residue protein sequence, read N- to C-terminus: Integrin beta-6 (788 aa).

Residues 1 to 21 (MGIELLCLFFLCLGRNDHVQG) form the signal peptide. Positions 22-71 (GCAVGGAETCEDCLLIGPQCAWCSQENFTHLSGVGERCDTPANLLAKGCQ) constitute a PSI domain. The Extracellular segment spans residues 22–709 (GCAVGGAETC…KDCPKPPNIP (688 aa)). Intrachain disulfides connect Cys-23/Cys-41, Cys-31/Cys-454, Cys-34/Cys-59, Cys-44/Cys-70, Cys-197/Cys-204, Cys-252/Cys-293, Cys-394/Cys-406, Cys-426/Cys-452, Cys-456/Cys-476, Cys-467/Cys-479, Cys-481/Cys-490, Cys-492/Cys-519, Cys-502/Cys-517, Cys-511/Cys-522, Cys-524/Cys-537, Cys-539/Cys-560, Cys-544/Cys-558, Cys-552/Cys-563, and Cys-565/Cys-574. N-linked (GlcNAc...) asparagine glycosylation is found at Asn-48 and Asn-97. A VWFA domain is found at 131–371 (YPVDLYYLMD…QLIISAYEEL (241 aa)). Mg(2+) contacts are provided by Asp-140, Ser-142, and Ser-144. 4 residues coordinate Ca(2+): Ser-144, Asp-147, Asp-148, and Glu-179. The Ca(2+) site is built by Asn-235, Asp-237, Pro-239, and Glu-240. Glu-240 contacts Mg(2+). An N-linked (GlcNAc...) asparagine glycan is attached at Asn-260. The Ca(2+) site is built by Asp-271 and Lys-355. Asn-387 carries N-linked (GlcNAc...) asparagine glycosylation. The N-linked (GlcNAc...) asparagine glycan is linked to Asn-418. I-EGF domains lie at 456–491 (CQKEVEVNSSKCNNGNGSFQCGVCACHPGHMGHHCE), 492–538 (CGED…PYCQ), 539–575 (CDNFSCVRHKGLLCGDNGDCDCGECVCRSGWTGEYCN), and 576–615 (CTTSTDPCVSEDGILCSGRGDCVCGKCICTNPGASGPTCE). Asn-463 and Asn-471 each carry an N-linked (GlcNAc...) asparagine glycan. The N-linked (GlcNAc...) asparagine glycan is linked to Asn-541. Asn-575 carries an N-linked (GlcNAc...) asparagine glycan. 9 cysteine pairs are disulfide-bonded: Cys-576–Cys-599, Cys-583–Cys-597, Cys-591–Cys-602, Cys-604–Cys-614, Cys-617–Cys-620, Cys-624–Cys-670, Cys-630–Cys-649, Cys-633–Cys-645, and Cys-678–Cys-702. The chain crosses the membrane as a helical span at residues 710–730 (MIMLGVSLAILLIGVVLLCIW). The segment at 731 to 758 (KLLVSFHDRKEVAKFEAERSKAKWQTGT) is interaction with HAX1. Over 731–788 (KLLVSFHDRKEVAKFEAERSKAKWQTGTNPLYRGSTSTFKNVTYKHKEKQKVDLSTDG) the chain is Cytoplasmic.

This sequence belongs to the integrin beta chain family. As to quaternary structure, heterodimer of an alpha and a beta subunit. Interacts with FLNB. Interacts with HAX1. ITGAV:ITGB6 interacts with FBN1. ITGAV:ITGB6 interacts with TGFB1.

It is found in the cell membrane. The protein resides in the cell junction. The protein localises to the focal adhesion. Integrin alpha-V:beta-6 (ITGAV:ITGB6) is a receptor for fibronectin and cytotactin. It recognizes the sequence R-G-D in its ligands. ITGAV:ITGB6 acts as a receptor for fibrillin-1 (FBN1) and mediates R-G-D-dependent cell adhesion to FBN1. Integrin alpha-V:beta-6 (ITGAV:ITGB6) mediates R-G-D-dependent release of transforming growth factor beta-1 (TGF-beta-1) from regulatory Latency-associated peptide (LAP), thereby playing a key role in TGF-beta-1 activation. The sequence is that of Integrin beta-6 (ITGB6) from Bos taurus (Bovine).